The primary structure comprises 1184 residues: Protocadherin-12 (1184 aa).

A signal peptide spans 1–24 (MMQLLQLLLGLLGPGGYLFLLGDC). The Extracellular segment spans residues 25 to 718 (QEVTTLTVKY…PGALSMSMLT (694 aa)). Cadherin domains lie at 28 to 135 (TTLT…QPRF), 136 to 244 (PKGE…SPAF), 245 to 352 (AESS…IPSI), 355 to 460 (TWAS…APVF), and 461 to 565 (EKSR…APEV). Asn-415 is a glycosylation site (N-linked (GlcNAc...) asparagine). Asn-582, Asn-659, and Asn-662 each carry an N-linked (GlcNAc...) asparagine glycan. The region spanning 600–711 (PAGTDTPPLA…LRDSARKPGA (112 aa)) is the Cadherin 6 domain. A helical membrane pass occupies residues 719–739 (VICLAVLLGIFGLILALFMSI). Over 740-1184 (CRTEKKDNRA…RGSSSSSRCL (445 aa)) the chain is Cytoplasmic. Disordered regions lie at residues 854–928 (RQRN…ESGP) and 973–1023 (QFQP…DPEE). Residue Ser-859 is modified to Phosphoserine. Acidic residues predominate over residues 1012 to 1023 (PEQEEGPLDPEE). Ser-1062 bears the Phosphoserine mark. The segment at 1153-1184 (SAASGMKVQGDPGGKTGTEGKSRGSSSSSRCL) is disordered. A compositionally biased stretch (low complexity) spans 1175–1184 (RGSSSSSRCL).

Post-translationally, cleaved by ADAM10 close to the transmembrane domain to release the Protocadherin-12, secreted form in the serum. Cleavage results in reduced cellular adhesion in a cell migration assay. As to expression, expressed in highly vascularized tissues including the heart and placenta, but most tissues contain a low level of expression. Prominent expression in the spleen. Present in villous and extravillous trophoblast (at protein level).

It is found in the cell membrane. The protein localises to the cell junction. Its subcellular location is the secreted. Its function is as follows. Cellular adhesion molecule that may play an important role in cell-cell interactions at interendothelial junctions. Acts as a regulator of cell migration, probably via increasing cell-cell adhesion. Promotes homotypic calcium-dependent aggregation and adhesion and clusters at intercellular junctions. Unable to bind to catenins, weakly associates with the cytoskeleton. This Homo sapiens (Human) protein is Protocadherin-12.